Here is a 240-residue protein sequence, read N- to C-terminus: Probable transcriptional regulatory protein HP_0162 (240 aa).

Belongs to the TACO1 family.

Its subcellular location is the cytoplasm. This chain is Probable transcriptional regulatory protein HP_0162, found in Helicobacter pylori (strain ATCC 700392 / 26695) (Campylobacter pylori).